The chain runs to 116 residues: Cation channel sperm-associated auxiliary subunit TMEM262 (116 aa).

Residues 1-16 (MRWRDRIAVLCFPPGL) are Cytoplasmic-facing. Residues 17–38 (MLTVAALILFFIHMGVFASDVH) form a helical membrane-spanning segment. The Extracellular portion of the chain corresponds to 39 to 51 (NFCVIHNYDHMSF). Residues 52–72 (RYTVVLIFSQVISIGWAAMGS) traverse the membrane as a helical segment. Residues 73-84 (LYAEMTGDKFLR) are Cytoplasmic-facing. Residues 85 to 107 (CFALTILILNGAMFFNRLCLEFL) form a helical membrane-spanning segment. Over 108 to 116 (AINYREERH) the chain is Extracellular.

In terms of assembly, component of the CatSper complex or CatSpermasome composed of the core pore-forming members CATSPER1, CATSPER2, CATSPER3 and CATSPER4 as well as auxiliary members CATSPERB, CATSPERG, CATSPERD, CATSPERE, CATSPERZ, C2CD6/CATSPERT, SLCO6C1, TMEM249, TMEM262 and EFCAB9. HSPA1 may be an additional auxiliary complex member. The core complex members CATSPER1, CATSPER2, CATSPER3 and CATSPER4 form a heterotetrameric channel. The auxiliary CATSPERB, CATSPERG2, CATSPERD and CATSPERE subunits form a pavilion-like structure over the pore which stabilizes the complex through interactions with CATSPER4, CATSPER3, CATSPER1 and CATSPER2 respectively. SLCO6C1 interacts with CATSPERE and TMEM262/CATSPERH interacts with CATSPERB, further stabilizing the complex. C2CD6/CATSPERT interacts at least with CATSPERD and is required for targeting the CatSper complex in the flagellar membrane.

It is found in the cell projection. The protein localises to the cilium. It localises to the flagellum membrane. Its function is as follows. Auxiliary component of the CatSper complex, a complex involved in sperm cell hyperactivation. This is Cation channel sperm-associated auxiliary subunit TMEM262 from Mus musculus (Mouse).